The following is a 96-amino-acid chain: Protein transport protein Sec61 subunit beta (96 aa).

The span at 1-17 (MPGPTPSGTNVGSSGRS) shows a compositional bias: polar residues. The tract at residues 1 to 54 (MPGPTPSGTNVGSSGRSPSKAVAARAAGSTVRQRKNASCGTRSAGRTTSAGTGG) is disordered. Pro-2 is subject to N-acetylproline. The Cytoplasmic segment spans residues 2–71 (PGPTPSGTNV…DSPGLKVGPV (70 aa)). Position 7 is a phosphoserine (Ser-7). Thr-9 carries the post-translational modification Phosphothreonine. Phosphoserine occurs at positions 13, 14, and 17. Residue Cys-39 is the site of S-palmitoyl cysteine attachment. Over residues 40–50 (GTRSAGRTTSA) the composition is skewed to low complexity. The helical transmembrane segment at 72–91 (PVLVMSLLFIASVFMLHIWG) threads the bilayer. Over 92 to 96 (KYTRS) the chain is Lumenal.

Belongs to the SEC61-beta family. In terms of assembly, the SEC61 channel-forming translocon complex consists of channel-forming core components SEC61A1, SEC61B and SEC61G and different auxiliary components such as SEC62 and SEC63. The SEC61 channel associates with the multi-pass translocon (MPT) complex. Interacts with TRAM1.

It is found in the endoplasmic reticulum membrane. In terms of biological role, component of SEC61 channel-forming translocon complex that mediates transport of signal peptide-containing precursor polypeptides across the endoplasmic reticulum (ER). Forms a ribosome receptor and a gated pore in the ER membrane, both functions required for cotranslational translocation of nascent polypeptides. The SEC61 channel is also involved in ER membrane insertion of transmembrane proteins: it mediates membrane insertion of the first few transmembrane segments of proteins, while insertion of subsequent transmembrane regions of multi-pass membrane proteins is mediated by the multi-pass translocon (MPT) complex. The SEC61 channel cooperates with the translocating protein TRAM1 to import nascent proteins into the ER. This chain is Protein transport protein Sec61 subunit beta (SEC61B), found in Canis lupus familiaris (Dog).